The following is a 304-amino-acid chain: Elongation factor Ts (304 aa).

The segment at 80–83 (TDFV) is involved in Mg(2+) ion dislocation from EF-Tu.

Belongs to the EF-Ts family.

It localises to the cytoplasm. In terms of biological role, associates with the EF-Tu.GDP complex and induces the exchange of GDP to GTP. It remains bound to the aminoacyl-tRNA.EF-Tu.GTP complex up to the GTP hydrolysis stage on the ribosome. This chain is Elongation factor Ts, found in Clostridium tetani (strain Massachusetts / E88).